We begin with the raw amino-acid sequence, 572 residues long: Proline--tRNA ligase (572 aa).

The protein belongs to the class-II aminoacyl-tRNA synthetase family. ProS type 1 subfamily. Homodimer.

The protein localises to the cytoplasm. It carries out the reaction tRNA(Pro) + L-proline + ATP = L-prolyl-tRNA(Pro) + AMP + diphosphate. Its function is as follows. Catalyzes the attachment of proline to tRNA(Pro) in a two-step reaction: proline is first activated by ATP to form Pro-AMP and then transferred to the acceptor end of tRNA(Pro). As ProRS can inadvertently accommodate and process non-cognate amino acids such as alanine and cysteine, to avoid such errors it has two additional distinct editing activities against alanine. One activity is designated as 'pretransfer' editing and involves the tRNA(Pro)-independent hydrolysis of activated Ala-AMP. The other activity is designated 'posttransfer' editing and involves deacylation of mischarged Ala-tRNA(Pro). The misacylated Cys-tRNA(Pro) is not edited by ProRS. In Salmonella schwarzengrund (strain CVM19633), this protein is Proline--tRNA ligase.